Reading from the N-terminus, the 108-residue chain is Protein YcgL (108 aa).

Residues 12-96 (MFCVIYRSSK…PPEDLLKQHL (85 aa)) enclose the YcgL domain.

This is Protein YcgL from Escherichia coli O17:K52:H18 (strain UMN026 / ExPEC).